We begin with the raw amino-acid sequence, 819 residues long: Serine/threonine-protein phosphatase 1 regulatory subunit 10 (819 aa).

Residues 73–147 (KLLNNWLTYA…NDWMAVIRSQ (75 aa)) form the TFIIS N-terminal domain. 3 disordered regions span residues 151-204 (QPAD…KFRS), 296-391 (KIKK…RKTV), and 495-785 (SVPD…GGDM). 2 stretches are compositionally biased toward basic and acidic residues: residues 153–165 (ADKE…EDAK) and 173–190 (KTSE…EKPK). Polar residues predominate over residues 305–327 (SPTSNKASPFDSKSPTEASSLTK). Residues 386–415 (KKRKTVSWPEESRLREYFYFELDETERVNV) carry the PP1-binding motif motif. Basic and acidic residues predominate over residues 495 to 504 (SVPDTPHEPD). Composition is skewed to polar residues over residues 533 to 543 (MDQSTESQSPD) and 560 to 578 (MGSS…QEIL). The segment covering 589-604 (KPEDLMKQPDFSEKIK) has biased composition (basic and acidic residues). Residues 606–618 (LLGSLQNQNQNQG) are compositionally biased toward low complexity. 2 stretches are compositionally biased toward pro residues: residues 635-663 (FPPP…PGPN) and 670-695 (HGPP…PPPN). Basic and acidic residues-rich tracts occupy residues 704–715 (HGGERGGMRGGD) and 758–777 (HGDH…GDHR). Residues 785–813 (MSTRPTCRHFMMKGNCRYENNCAFYHPGI) form a C3H1-type zinc finger.

As to quaternary structure, component of the PNUTS-PP1 complex (also named PTW/PP1 complex).

The protein localises to the nucleus. It localises to the chromosome. Functionally, substrate-recognition component of the PNUTS-PP1 protein phosphatase complex, a protein phosphatase 1 (PP1) complex that promotes RNA polymerase II transcription pause-release, allowing transcription elongation. Promoter-proximal pausing by RNA polymerase II is a transcription halt following transcription initiation but prior to elongation, which acts as a checkpoint to control that transcripts are favorably configured for transcriptional elongation. The PNUTS-PP1 complex mediates the release of RNA polymerase II from promoter-proximal region of genes by catalyzing dephosphorylation of proteins involved in transcription. In some context, PPP1R10/PNUTS also acts as an inhibitor of protein phosphatase 1 (PP1) activity by preventing access to substrates. The chain is Serine/threonine-protein phosphatase 1 regulatory subunit 10 (ppp1r10) from Xenopus laevis (African clawed frog).